Consider the following 433-residue polypeptide: MAEEIKLTPLETFAQAISASAKTIATYCRDSGHPQLSDDNSSGLTGDVLPPSAPQAVTAARQTILEASYRLQQLVTEPSQYLPRLTVYPQHLAALRWLCHFRIPELIPVQGTRTYYELATEAKVPLHQLQSIARMAITGSFLREPEPNIVAHSRTSAHFVENPSLRDWTLFLAEDTAPMAMKLVEATEKWGDTRSKTETAFNLALGTDLAFFKYLSSNPQFTQKFSGYMKNVTASEGTSIKHLVNGFDWASLGNAIVVDVGGSTGHASIALAESFPDLKFIVQDLPMVTSTSKDNREKTPLPETVASRISFESHDFFKPQPVQNADVYLLRMILHDWSFKEAGEILANLVPSVKQGARILIMDTVLPRHGTVPVTEEALLRVRDMTMMETFNSHEREIDEWKDLIQGVHTGLRVQQVIQPAGSSMAIIEVVRG.

Asp284 contributes to the S-adenosyl-L-methionine binding site. His335 (proton acceptor) is an active-site residue.

The protein belongs to the class I-like SAM-binding methyltransferase superfamily. Cation-independent O-methyltransferase family. COMT subfamily.

It carries out the reaction 7,9,10-trihydroxy-3-(2-oxopropyl)-1H-benzo[g]isochromen-1-one + S-adenosyl-L-methionine = 9,10-dihydroxy-7-methoxy-3-(2-oxopropyl)-1H-benzo[g]isochromen-1-one + S-adenosyl-L-homocysteine + H(+). It participates in secondary metabolite biosynthesis. In terms of biological role, O-methyltransferase; part of the gene cluster that mediates the biosynthesis of viriditoxin, one of the 'classical' secondary metabolites produced by fungi and that has antibacterial activity. The first step is performed by the polyketide synthase VdtA which condenses one acetyl-CoA and 6 malonyl-CoA units to form the heptaketide monomer backbone of viriditoxin. The product of VdtA is then O-methylated on C7 by the O-methyltransferase VdtC. The O-methyl group is important for the stereoselective coupling of the monomers at the final step of viriditoxin biosynthesis. The short-chain dehydrogenase/reductase VdtF then acts as a stereospecific reductase converting the pyrone to dihydropyrone via the reduction of the C3-C4 double bond. The FAD-binding monooxygenase VdtE then converts the ketone group into a methyl-ester group to yield semi-viriditoxin. Finally, the laccase VdtB is involved in dimerization of 2 semi-viriditoxin molecules to yield the final viriditoxin. VdtB is responsible for the regioselective 6,6'-coupling of semi-viriditoxin, which yields (M)-viriditoxin and (P)-viriditoxin at a ratio of 1:2. The non-catalytic carboxylesterase-like protein VdtD affects the stereochemistical outcome of the coupling. The highly reducing polyketide synthase VdtX is not involved in viriditoxin synthesis, but might possibly play a role in the production of additional metabolites not identified yet. The sequence is that of O-methyltransferase VdtC from Byssochlamys spectabilis (Paecilomyces variotii).